Here is a 592-residue protein sequence, read N- to C-terminus: Transmembrane 9 superfamily member 3 (592 aa).

Residues 1–19 (MRLPTTLLLFIGALIFSGA) form the signal peptide. The Lumenal portion of the chain corresponds to 20 to 229 (GTVRSDASDH…SLPHHLEIHW (210 aa)). Residues 230–250 (FSIINSCVTVLLLTGFLATIL) form a helical membrane-spanning segment. Residues 251 to 302 (MRVLKNDFMKYAQDEEAADDQEETGWKYIHGDVFRFPKNKSLFAASLGSGTQ) are Cytoplasmic-facing. A helical membrane pass occupies residues 303–323 (LFTLTIFIFMLSLVGVFYPYN). The Lumenal segment spans residues 324–325 (RG). The helical transmembrane segment at 326-346 (ALFTALVVIYALTSGIAGYTA) threads the bilayer. At 347 to 365 (SSFYCQLEGKNWVRNLLLT) the chain is on the cytoplasmic side. A helical transmembrane segment spans residues 366-386 (GGLFCGPLFLTFCFLNTVAIA). Topologically, residues 387–397 (YSATAALPFGT) are lumenal. A helical transmembrane segment spans residues 398–418 (IIVIVLIWTLVTSPLLVLGGI). Topologically, residues 419–452 (AGKNSKAEFQAPVRTTKYPREIPPLPWYRSAVPQ) are cytoplasmic. Residues 453–473 (MAMAGFLPFSAIYIELYYIFA) traverse the membrane as a helical segment. Residues 474–485 (SVWGHRIYTIYS) lie on the Lumenal side of the membrane. The chain crosses the membrane as a helical span at residues 486 to 506 (ILFIVFIILLIVTAFITVALT). Residues 507-521 (YFQLAAEDHEWWWRS) are Cytoplasmic-facing. Residues 522–542 (FLCGGSTGLFIYAYCLYYYYA) traverse the membrane as a helical segment. Topologically, residues 543-553 (RSDMSGFMQTS) are lumenal. Residues 554–574 (FFFGYMACICYGFFLMLGTVG) form a helical membrane-spanning segment. Topologically, residues 575-592 (FRAALLFVRHIYRSIKCE) are cytoplasmic. Residues 581–586 (FVRHIY) carry the Endoplasmic reticulum export signal motif. The short motif at 590–592 (KCE) is the Golgi retention signal element.

Belongs to the nonaspanin (TM9SF) (TC 9.A.2) family.

Its subcellular location is the endosome membrane. The protein resides in the golgi apparatus membrane. This is Transmembrane 9 superfamily member 3 from Arabidopsis thaliana (Mouse-ear cress).